The sequence spans 341 residues: HTH-type transcriptional repressor PurR (341 aa).

Positions 2–56 (ATIKDVAKRANVSTTTVSHVINKTRFVAEETRNAVWAAIKELHYSPSAVARSLKV) constitute an HTH lacI-type domain. The segment at residues 4–23 (IKDVAKRANVSTTTVSHVIN) is a DNA-binding region (H-T-H motif). The DNA-binding element occupies 48–56 (SAVARSLKV). 5 residues coordinate hypoxanthine: Tyr73, Arg190, Thr192, Phe221, and Asp275.

Homodimer.

It participates in purine metabolism; purine nucleotide biosynthesis [regulation]. Is the main repressor of the genes involved in the de novo synthesis of purine nucleotides, regulating purB, purC, purEK, purF, purHD, purL, purMN and guaBA expression. PurR is allosterically activated to bind its cognate DNA by binding the purine corepressors, hypoxanthine or guanine, thereby effecting transcription repression. The chain is HTH-type transcriptional repressor PurR from Klebsiella pneumoniae (strain 342).